The primary structure comprises 90 residues: Probable Fe(2+)-trafficking protein (90 aa).

The protein belongs to the Fe(2+)-trafficking protein family.

Functionally, could be a mediator in iron transactions between iron acquisition and iron-requiring processes, such as synthesis and/or repair of Fe-S clusters in biosynthetic enzymes. This chain is Probable Fe(2+)-trafficking protein, found in Saccharophagus degradans (strain 2-40 / ATCC 43961 / DSM 17024).